The chain runs to 202 residues: MALVIGLTGGIASGKTTVANLFQQHFAIDIVDADIVARQVVAPGSAGLAAIVDHFGADILTCEGELDRGQLRQRIFAHSEEKQWLNALLHPMIRRKMIEDLAQVSSPYALLVVPLLVENQLQTLCDRVLVVDVEEKTQLQRTMDRDSVDEQQVRAILKAQASRHERLALADDVIKNESKDQDLLQQITDLHQKYLAMSKQNR.

In terms of domain architecture, DPCK spans 4 to 201; the sequence is VIGLTGGIAS…QKYLAMSKQN (198 aa). Residue 12-17 participates in ATP binding; the sequence is ASGKTT.

Belongs to the CoaE family.

The protein resides in the cytoplasm. The catalysed reaction is 3'-dephospho-CoA + ATP = ADP + CoA + H(+). Its pathway is cofactor biosynthesis; coenzyme A biosynthesis; CoA from (R)-pantothenate: step 5/5. Functionally, catalyzes the phosphorylation of the 3'-hydroxyl group of dephosphocoenzyme A to form coenzyme A. This Vibrio vulnificus (strain CMCP6) protein is Dephospho-CoA kinase.